The primary structure comprises 371 residues: tRNA/tmRNA (uracil-C(5))-methyltransferase (371 aa).

The S-adenosyl-L-methionine site is built by Gln194, Tyr223, Asn228, Glu244, and Asp304. Cys329 functions as the Nucleophile in the catalytic mechanism. Glu363 acts as the Proton acceptor in catalysis.

It belongs to the class I-like SAM-binding methyltransferase superfamily. RNA M5U methyltransferase family. TrmA subfamily.

It catalyses the reaction uridine(54) in tRNA + S-adenosyl-L-methionine = 5-methyluridine(54) in tRNA + S-adenosyl-L-homocysteine + H(+). The catalysed reaction is uridine(341) in tmRNA + S-adenosyl-L-methionine = 5-methyluridine(341) in tmRNA + S-adenosyl-L-homocysteine + H(+). Dual-specificity methyltransferase that catalyzes the formation of 5-methyluridine at position 54 (m5U54) in all tRNAs, and that of position 341 (m5U341) in tmRNA (transfer-mRNA). In Sulfurovum sp. (strain NBC37-1), this protein is tRNA/tmRNA (uracil-C(5))-methyltransferase.